Consider the following 430-residue polypeptide: Alpha-humulene synthase asR6 (430 aa).

Belongs to the terpene synthase family. Alpha-humulene synthase eupE subfamily. Requires Mg(2+) as cofactor.

It carries out the reaction (2E,6E)-farnesyl diphosphate = alpha-humulene + diphosphate. It functions in the pathway secondary metabolite biosynthesis; terpenoid biosynthesis. Alpha-humulene synthase; part of the gene cluster that mediates the biosynthesis of xenovulene A, an unusual meroterpenoid that has potent inhibitory effects on the human gamma-aminobutyrate A (GABAA) benzodiazepine receptor. The first step of xenovulene A biosynthesis is the biosynthesis of 3-methylorcinaldehyde performed by the non-reducing polyketide synthase aspks1. The salicylate hydroxylase asL1 then catalyzes the oxidative dearomatization of 3-methylorcinaldehyde to yield a dearomatized hydroxycyclohexadione. The 2-oxoglutarate-dependent dioxygenase asL3 further catalyzes the oxidative ring expansion to provide the first tropolone metabolite. The cytochrome P450 monooxygenase asR2 allows the synthesis of tropolone hemiacetal. In parallel, a previously unrecognised class of terpene cyclase, asR6, produces alpha-humulene from farnesylpyrophosphate (FPP). The putative Diels-Alderase asR5 probably catalyzes the formation of the tropolone-humulene skeleton by linking humulene and the polyketide moiety. Oxidative-ring contractions catalyzed by asL4 and asL6 then processively remove carbon atoms from the polyketide to yield xenovulene A. The sequence is that of Alpha-humulene synthase asR6 from Sarocladium schorii (Acremonium strictum (strain IMI 501407)).